Here is a 116-residue protein sequence, read N- to C-terminus: Putative iron-sulfur cluster insertion protein ErpA (116 aa).

Iron-sulfur cluster is bound by residues C44, C108, and C110.

It belongs to the HesB/IscA family. Homodimer. The cofactor is iron-sulfur cluster.

In terms of biological role, required for insertion of 4Fe-4S clusters. The protein is Putative iron-sulfur cluster insertion protein ErpA of Herminiimonas arsenicoxydans.